A 212-amino-acid chain; its full sequence is Uridine kinase (212 aa).

13 to 20 (GASASGKS) serves as a coordination point for ATP.

Belongs to the uridine kinase family.

Its subcellular location is the cytoplasm. The enzyme catalyses uridine + ATP = UMP + ADP + H(+). It catalyses the reaction cytidine + ATP = CMP + ADP + H(+). The protein operates within pyrimidine metabolism; CTP biosynthesis via salvage pathway; CTP from cytidine: step 1/3. It participates in pyrimidine metabolism; UMP biosynthesis via salvage pathway; UMP from uridine: step 1/1. The chain is Uridine kinase from Shewanella amazonensis (strain ATCC BAA-1098 / SB2B).